We begin with the raw amino-acid sequence, 1402 residues long: Roundabout homolog 3 (1402 aa).

A signal peptide spans 1-20 (MLRYLLKTLLQMNLFADSLA). Residues 21 to 891 (RDISNSSELL…ERLAKVLRKP (871 aa)) are Extracellular-facing. N-linked (GlcNAc...) asparagine glycosylation is found at N25, N34, and N53. 5 consecutive Ig-like C2-type domains span residues 64 to 160 (PRIV…ASLE), 166 to 253 (DDFR…AELV), 258 to 342 (PSFL…GSLS), 347 to 440 (PQFV…ALLE), and 450 to 531 (PPII…GEAT). C85 and C143 are joined by a disulfide. N156 carries N-linked (GlcNAc...) asparagine glycosylation. 2 disulfide bridges follow: C187/C236 and C279/C326. N-linked (GlcNAc...) asparagine glycosylation is found at N355, N363, N410, N459, and N503. C368 and C424 are joined by a disulfide. C472 and C521 are oxidised to a cystine. Disordered regions lie at residues 540–561 (EDWG…PPSQ) and 639–662 (EPSP…EDPW). The span at 543-552 (GASPGPATGP) shows a compositional bias: low complexity. 3 Fibronectin type-III domains span residues 558–652 (PPSQ…TQDS), 672–766 (AVRM…IPEE), and 771–869 (PPQG…FPPA). Positions 646 to 655 (PVQTQDSSLS) are enriched in polar residues. 3 N-linked (GlcNAc...) asparagine glycosylation sites follow: N784, N813, and N820. The chain crosses the membrane as a helical span at residues 892 to 912 (AFLAGSSAACGALLLGFCAAL). Over 913–1402 (YRRQKQRKEL…PGRNRREEPR (490 aa)) the chain is Cytoplasmic. Disordered stretches follow at residues 965 to 989 (SWPH…NPDP), 1032 to 1307 (FHGG…VVQA), and 1340 to 1402 (GRPS…EEPR). 2 stretches are compositionally biased toward polar residues: residues 1038 to 1049 (QHSSGDPSTWSQ) and 1142 to 1152 (PSPTSSYGQQS). Over residues 1158–1169 (PSPPDPPQPPTD) the composition is skewed to pro residues. Composition is skewed to low complexity over residues 1178–1191 (RRVP…LSVS) and 1215–1228 (ASPS…SSAP). The span at 1243–1254 (HGHRARIRKKPK) shows a compositional bias: basic residues. S1263 bears the Phosphoserine mark. Over residues 1294–1304 (LERERSGERRV) the composition is skewed to basic and acidic residues. Over residues 1346–1357 (SHGQGTSTCSTA) the composition is skewed to polar residues. The span at 1358 to 1371 (GSNSSRGSNSSRGS) shows a compositional bias: low complexity.

Belongs to the immunoglobulin superfamily. ROBO family. Interacts (via Fibronectin type-III 1 domain) with NELL2 (via the EGF domains) with a 3:3 stoichiometry; this interaction promotes oligomerization of ROBO3 resulting in the repulsion of commissural axons in the midline. Detected in embryonal spinal cord and hindbrain.

Its subcellular location is the membrane. Its function is as follows. Receptor involved in axon guidance during development. Acts as a multifunctional regulator of pathfinding that simultaneously mediates NELL2 repulsion, inhibits SLIT repulsion, and facilitates Netrin-1/NTN1 attraction. In spinal cord development plays a role in guiding commissural axons probably by preventing premature sensitivity to Slit proteins thus inhibiting Slit signaling through ROBO1/ROBO2. Binding OF NELL2 to the receptor ROBO3 promotes oligomerization of ROBO3, resulting in the repulsion of commissural axons in the midline. ROBO3 also indirectly boosts axon attraction to NTN1 without interacting with NTN1 itself. In terms of biological role, mediates NELL2 premature repulsion of commissural axons during midline crossing. Functionally, after midline crossing by the commissural axons, may, in concert with ROBO1 and ROBO2, prevent midline recrossing. Does not mediate NELL2 signaling. The protein is Roundabout homolog 3 of Mus musculus (Mouse).